The sequence spans 175 residues: Large ribosomal subunit protein uL16 (175 aa).

It belongs to the universal ribosomal protein uL16 family.

The chain is Large ribosomal subunit protein uL16 from Caldivirga maquilingensis (strain ATCC 700844 / DSM 13496 / JCM 10307 / IC-167).